A 577-amino-acid polypeptide reads, in one-letter code: General transcription factor IIF subunit 1 (577 aa).

Residues 1 to 36 (MSSASKSTPSAASGSSTSAAAAAAASVASGSASSSA) form a disordered region. A phosphoserine mark is found at Ser-183, Ser-246, Ser-250, and Ser-252. The interval 236-508 (KITDMDEWID…TSLPTSFSGG (273 aa)) is disordered. Acidic residues predominate over residues 240 to 256 (MDEWIDSEDESDSEDEE). Positions 257-271 (DKKKKEQEDSDDGKA) are enriched in basic and acidic residues. The segment covering 272–285 (KGKGKKGADKKKKK) has biased composition (basic residues). Acidic residues predominate over residues 289–304 (DDEAFEESDDGDEEGR). Positions 319–341 (PEAKVDKDMKGVAEEDALRKLLT) are enriched in basic and acidic residues. Residue Thr-341 is modified to Phosphothreonine. Phosphoserine occurs at positions 342, 352, and 355. Residues 362–376 (GEKKKKDKGKDEVSK) are compositionally biased toward basic and acidic residues. Residues 392–406 (SNGSGDSSTDFSSDS) are compositionally biased toward low complexity. The span at 423-437 (VVKDKDKEKEKEKES) shows a compositional bias: basic and acidic residues. Residues 438-456 (AASSKVIASSSNANKSRSA) show a composition bias toward low complexity. Phosphoserine is present on residues Ser-453 and Ser-455. Thr-457 bears the Phosphothreonine mark. Polar residues-rich tracts occupy residues 471 to 489 (SLPSDLTASDTSNSPTSTP) and 496 to 506 (EISTSLPTSFS). Phosphoserine is present on residues Ser-482 and Ser-484. Thr-488 carries the post-translational modification Phosphothreonine.

Belongs to the TFIIF alpha subunit family. In terms of assembly, heterodimer of an alpha and a beta subunit. Post-translationally, phosphorylated on Ser and other residues by TAF1 and casein kinase II-like kinases.

The protein localises to the nucleus. Its function is as follows. TFIIF is a general transcription initiation factor that binds to RNA polymerase II and helps to recruit it to the initiation complex in collaboration with TFIIB. It promotes transcription elongation. The polypeptide is General transcription factor IIF subunit 1 (Drosophila melanogaster (Fruit fly)).